We begin with the raw amino-acid sequence, 673 residues long: UvrABC system protein B (673 aa).

A Helicase ATP-binding domain is found at Glu-26–Arg-183. Gly-39–Thr-46 provides a ligand contact to ATP. The short motif at Tyr-92–Val-115 is the Beta-hairpin element. Residues Gln-431–Leu-597 enclose the Helicase C-terminal domain. The region spanning Gln-633 to Leu-668 is the UVR domain.

The protein belongs to the UvrB family. In terms of assembly, forms a heterotetramer with UvrA during the search for lesions. Interacts with UvrC in an incision complex.

Its subcellular location is the cytoplasm. In terms of biological role, the UvrABC repair system catalyzes the recognition and processing of DNA lesions. A damage recognition complex composed of 2 UvrA and 2 UvrB subunits scans DNA for abnormalities. Upon binding of the UvrA(2)B(2) complex to a putative damaged site, the DNA wraps around one UvrB monomer. DNA wrap is dependent on ATP binding by UvrB and probably causes local melting of the DNA helix, facilitating insertion of UvrB beta-hairpin between the DNA strands. Then UvrB probes one DNA strand for the presence of a lesion. If a lesion is found the UvrA subunits dissociate and the UvrB-DNA preincision complex is formed. This complex is subsequently bound by UvrC and the second UvrB is released. If no lesion is found, the DNA wraps around the other UvrB subunit that will check the other stand for damage. This chain is UvrABC system protein B, found in Salmonella arizonae (strain ATCC BAA-731 / CDC346-86 / RSK2980).